A 576-amino-acid chain; its full sequence is Formate--tetrahydrofolate ligase (576 aa).

Residue 64-71 (TPLGEGKT) participates in ATP binding.

It belongs to the formate--tetrahydrofolate ligase family.

The catalysed reaction is (6S)-5,6,7,8-tetrahydrofolate + formate + ATP = (6R)-10-formyltetrahydrofolate + ADP + phosphate. Its pathway is one-carbon metabolism; tetrahydrofolate interconversion. The sequence is that of Formate--tetrahydrofolate ligase from Aeromonas hydrophila subsp. hydrophila (strain ATCC 7966 / DSM 30187 / BCRC 13018 / CCUG 14551 / JCM 1027 / KCTC 2358 / NCIMB 9240 / NCTC 8049).